The chain runs to 283 residues: Lipoyl synthase (283 aa).

[4Fe-4S] cluster is bound by residues Cys-35, Cys-40, Cys-46, Cys-61, Cys-65, Cys-68, and Ser-273. A Radical SAM core domain is found at Phe-47–Ala-262.

The protein belongs to the radical SAM superfamily. Lipoyl synthase family. The cofactor is [4Fe-4S] cluster.

The protein localises to the cytoplasm. It catalyses the reaction [[Fe-S] cluster scaffold protein carrying a second [4Fe-4S](2+) cluster] + N(6)-octanoyl-L-lysyl-[protein] + 2 oxidized [2Fe-2S]-[ferredoxin] + 2 S-adenosyl-L-methionine + 4 H(+) = [[Fe-S] cluster scaffold protein] + N(6)-[(R)-dihydrolipoyl]-L-lysyl-[protein] + 4 Fe(3+) + 2 hydrogen sulfide + 2 5'-deoxyadenosine + 2 L-methionine + 2 reduced [2Fe-2S]-[ferredoxin]. The protein operates within protein modification; protein lipoylation via endogenous pathway; protein N(6)-(lipoyl)lysine from octanoyl-[acyl-carrier-protein]: step 2/2. Its function is as follows. Catalyzes the radical-mediated insertion of two sulfur atoms into the C-6 and C-8 positions of the octanoyl moiety bound to the lipoyl domains of lipoate-dependent enzymes, thereby converting the octanoylated domains into lipoylated derivatives. This is Lipoyl synthase from Geobacter metallireducens (strain ATCC 53774 / DSM 7210 / GS-15).